We begin with the raw amino-acid sequence, 410 residues long: Multifunctional CCA protein (410 aa).

ATP is bound by residues Gly-8 and Arg-11. Positions 8 and 11 each coordinate CTP. Mg(2+) contacts are provided by Asp-21 and Asp-23. Residues Arg-91, Arg-138, and Arg-141 each coordinate ATP. Positions 91, 138, and 141 each coordinate CTP. Residues 229 to 347 (TGIHQEMVSD…AQLALVCEAD (119 aa)) form the HD domain.

It belongs to the tRNA nucleotidyltransferase/poly(A) polymerase family. Bacterial CCA-adding enzyme type 1 subfamily. Monomer. Can also form homodimers and oligomers. The cofactor is Mg(2+). It depends on Ni(2+) as a cofactor.

The catalysed reaction is a tRNA precursor + 2 CTP + ATP = a tRNA with a 3' CCA end + 3 diphosphate. It catalyses the reaction a tRNA with a 3' CCA end + 2 CTP + ATP = a tRNA with a 3' CCACCA end + 3 diphosphate. Functionally, catalyzes the addition and repair of the essential 3'-terminal CCA sequence in tRNAs without using a nucleic acid template. Adds these three nucleotides in the order of C, C, and A to the tRNA nucleotide-73, using CTP and ATP as substrates and producing inorganic pyrophosphate. tRNA 3'-terminal CCA addition is required both for tRNA processing and repair. Also involved in tRNA surveillance by mediating tandem CCA addition to generate a CCACCA at the 3' terminus of unstable tRNAs. While stable tRNAs receive only 3'-terminal CCA, unstable tRNAs are marked with CCACCA and rapidly degraded. This Xanthomonas axonopodis pv. citri (strain 306) protein is Multifunctional CCA protein.